Consider the following 255-residue polypeptide: High-affinity branched-chain amino acid transport ATP-binding protein BraF (255 aa).

The ABC transporter domain maps to 6 to 254 (LEVSGLTMRF…PDVIKAYLGE (249 aa)). 38 to 45 (GPNGAGKT) provides a ligand contact to ATP.

This sequence belongs to the ABC transporter superfamily.

It is found in the cell inner membrane. In terms of biological role, component of the high affinity leucine, isoleucine, valine, transport system (LIV-I), which is operative without Na(+) and is specific for alanine and threonine, in addition to branched-chain amino acids. The chain is High-affinity branched-chain amino acid transport ATP-binding protein BraF (braF) from Pseudomonas aeruginosa (strain ATCC 15692 / DSM 22644 / CIP 104116 / JCM 14847 / LMG 12228 / 1C / PRS 101 / PAO1).